The primary structure comprises 436 residues: T-box transcription factor T (436 aa).

Positions 51–219 form a DNA-binding region, T-box; that stretch reads LWLRFKELTN…YNPFAKAFLD (169 aa).

In terms of assembly, monomer. Binds DNA as a monomer.

It localises to the nucleus. Involved in the transcriptional regulation of genes required for mesoderm formation and differentiation. Binds to a palindromic T site 5'-TTCACACCTAGGTGTGAA-3' DNA sequence and activates gene transcription when bound to such a site. The polypeptide is T-box transcription factor T (Mus musculus (Mouse)).